The chain runs to 394 residues: Chaperone protein DnaJ (394 aa).

Residues 6–71 (DYYEVLEVTK…DKRARYDQFG (66 aa)) enclose the J domain. The CR-type zinc finger occupies 152 to 234 (GVEKKFKLKK…CGGEGIEYGE (83 aa)). Zn(2+) is bound by residues cysteine 165, cysteine 168, cysteine 182, cysteine 185, cysteine 208, cysteine 211, cysteine 222, and cysteine 225. CXXCXGXG motif repeat units follow at residues 165–172 (CSHCHGTG), 182–189 (CPTCKGSG), 208–215 (CPTCNGEG), and 222–229 (CKVCGGEG).

It belongs to the DnaJ family. As to quaternary structure, homodimer. Zn(2+) serves as cofactor.

Its subcellular location is the cytoplasm. Participates actively in the response to hyperosmotic and heat shock by preventing the aggregation of stress-denatured proteins and by disaggregating proteins, also in an autonomous, DnaK-independent fashion. Unfolded proteins bind initially to DnaJ; upon interaction with the DnaJ-bound protein, DnaK hydrolyzes its bound ATP, resulting in the formation of a stable complex. GrpE releases ADP from DnaK; ATP binding to DnaK triggers the release of the substrate protein, thus completing the reaction cycle. Several rounds of ATP-dependent interactions between DnaJ, DnaK and GrpE are required for fully efficient folding. Also involved, together with DnaK and GrpE, in the DNA replication of plasmids through activation of initiation proteins. The chain is Chaperone protein DnaJ from Bacteroides fragilis (strain YCH46).